The primary structure comprises 285 residues: Phospholipid phosphatase 1 (285 aa).

Over 1–6 the chain is Cytoplasmic; it reads MFDKAR. The PDZ-binding; involved in localization to the apical cell membrane motif lies at 5-7; the sequence is ARL. The helical transmembrane segment at 7–27 threads the bilayer; sequence LPYVALDVLCVVLAGLPFAIL. Residues 28-53 are Extracellular-facing; it reads TSRHTPFQRGIFCNDESIKYPYKEDT. Residues 54–74 form a helical membrane-spanning segment; the sequence is IPYALLGGIMIPFSIVVMIIG. The Cytoplasmic segment spans residues 75-94; that stretch reads ETLSVYCNLLHSNSFIRNNY. The helical transmembrane segment at 95 to 115 threads the bilayer; that stretch reads IATIYKSIGTFLFGAAASQSL. The Extracellular segment spans residues 116–165; sequence TDIAKYSIGRLRPHFLSVCDPDWSKVNCSDGYIEYYVCRGNAEKVKEGRL. The tract at residues 120–128 is phosphatase sequence motif I; the sequence is KYSIGRLRP. Residue N142 is glycosylated (N-linked (GlcNAc...) asparagine). Residues 166 to 186 traverse the membrane as a helical segment; it reads SFYSGHSSFSMYCMVFVALYL. The interval 168-171 is phosphatase sequence motif II; it reads YSGH. The Proton donors role is filled by H171. Over 187-199 the chain is Cytoplasmic; that stretch reads QARMKGDWARLLR. Residues 200 to 220 form a helical membrane-spanning segment; it reads PTLQFGLVAASIYVGLSRISD. A phosphatase sequence motif III region spans residues 216-227; it reads SRISDYKHHWSD. Residues 221 to 229 are Extracellular-facing; that stretch reads YKHHWSDVL. H223 serves as the catalytic Nucleophile. The chain crosses the membrane as a helical span at residues 230–250; it reads TGLIQGAIVAILVAVYVSDFF. Residues 251–285 are Cytoplasmic-facing; the sequence is KARNSPFQERKEEDSHTTLHETPTAGNHYRSNHQP. Residues 260–269 show a composition bias toward basic and acidic residues; that stretch reads RKEEDSHTTL. The tract at residues 260–285 is disordered; that stretch reads RKEEDSHTTLHETPTAGNHYRSNHQP.

This sequence belongs to the PA-phosphatase related phosphoesterase family. As to quaternary structure, forms functional homodimers and homooligomers that are not required for substrate recognition and catalytic activity. Can also form heterooligomers with PLPP2 and PLPP3. In terms of processing, N-glycosylated. N-linked sugars are of the complex type. N-glycosylation is not required for the phosphatase activity.

It localises to the cell membrane. The protein resides in the apical cell membrane. The protein localises to the membrane raft. Its subcellular location is the membrane. It is found in the caveola. The enzyme catalyses a 1,2-diacyl-sn-glycero-3-phosphate + H2O = a 1,2-diacyl-sn-glycerol + phosphate. It catalyses the reaction 1,2-dihexadecanoyl-sn-glycero-3-phosphate + H2O = 1,2-dihexadecanoyl-sn-glycerol + phosphate. It carries out the reaction 1,2-di-(9Z-octadecenoyl)-sn-glycero-3-phosphate + H2O = 1,2-di-(9Z-octadecenoyl)-sn-glycerol + phosphate. The catalysed reaction is a monoacyl-sn-glycero-3-phosphate + H2O = a monoacylglycerol + phosphate. The enzyme catalyses (9Z)-octadecenoyl-sn-glycero-3-phosphate + H2O = (9Z-octadecenoyl)-glycerol + phosphate. It catalyses the reaction a 1-acyl-sn-glycero-3-phosphate + H2O = a 1-acyl-sn-glycerol + phosphate. It carries out the reaction 1-(9Z-octadecenoyl)-sn-glycero-3-phosphate + H2O = 1-(9Z-octadecenoyl)-sn-glycerol + phosphate. The catalysed reaction is a 1,2-diacyl-sn-glycerol 3-diphosphate + H2O = a 1,2-diacyl-sn-glycero-3-phosphate + phosphate + H(+). The enzyme catalyses sphing-4-enine 1-phosphate + H2O = sphing-4-enine + phosphate. It catalyses the reaction an N-acylsphing-4-enine 1-phosphate + H2O = an N-acylsphing-4-enine + phosphate. It carries out the reaction N-(octanoyl)-sphing-4-enine-1-phosphate + H2O = N-octanoylsphing-4-enine + phosphate. The catalysed reaction is N-(9Z-octadecenoyl)-ethanolamine phosphate + H2O = N-(9Z-octadecenoyl) ethanolamine + phosphate. The enzyme catalyses 1-hexadecanoyl-2-(9Z-octadecenoyl)-sn-glycero-3-phosphate + H2O = 1-hexadecanoyl-2-(9Z-octadecenoyl)-sn-glycerol + phosphate. Its pathway is lipid metabolism; phospholipid metabolism. Magnesium-independent phospholipid phosphatase. Insensitive to N-ethylmaleimide. Functionally, magnesium-independent phospholipid phosphatase of the plasma membrane that catalyzes the dephosphorylation of a variety of glycerolipid and sphingolipid phosphate esters including phosphatidate/PA, lysophosphatidate/LPA, diacylglycerol pyrophosphate/DGPP, sphingosine 1-phosphate/S1P and ceramide 1-phosphate/C1P. Also acts on N-oleoyl ethanolamine phosphate/N-(9Z-octadecenoyl)-ethanolamine phosphate, a potential physiological compound. Through its extracellular phosphatase activity allows both the hydrolysis and the cellular uptake of these bioactive lipid mediators from the milieu, regulating signal transduction in different cellular processes. It is for instance essential for the extracellular hydrolysis of S1P and subsequent conversion into intracellular S1P. Involved in the regulation of inflammation, platelets activation, cell proliferation and migration among other processes. May also have an intracellular activity to regulate phospholipid-mediated signaling pathways. The sequence is that of Phospholipid phosphatase 1 from Cavia porcellus (Guinea pig).